Consider the following 133-residue polypeptide: Protein archease (133 aa).

D11, D132, and L133 together coordinate Ca(2+).

It belongs to the archease family.

Its function is as follows. Activates the tRNA-splicing ligase complex by facilitating the enzymatic turnover of catalytic subunit RtcB. Acts by promoting the guanylylation of RtcB, a key intermediate step in tRNA ligation. Can also alter the NTP specificity of RtcB such that ATP, dGTP or ITP is used efficiently. This is Protein archease from Thermoplasma volcanium (strain ATCC 51530 / DSM 4299 / JCM 9571 / NBRC 15438 / GSS1).